Here is a 59-residue protein sequence, read N- to C-terminus: UPF0434 protein PMI0721 (59 aa).

It belongs to the UPF0434 family.

The chain is UPF0434 protein PMI0721 from Proteus mirabilis (strain HI4320).